Here is a 237-residue protein sequence, read N- to C-terminus: Cytidylate kinase (237 aa).

ATP is bound at residue 15–23 (GPSGSGKGT).

The protein belongs to the cytidylate kinase family. Type 1 subfamily.

The protein resides in the cytoplasm. It carries out the reaction CMP + ATP = CDP + ADP. The enzyme catalyses dCMP + ATP = dCDP + ADP. The sequence is that of Cytidylate kinase from Coxiella burnetii (strain RSA 493 / Nine Mile phase I).